We begin with the raw amino-acid sequence, 180 residues long: Cytokinin-beta-glucosidase 3 (180 aa).

Hydrolyzes cytokinin glucosides thus liberating free cytokinins. The sequence is that of Cytokinin-beta-glucosidase 3 (ROLC3) from Panax ginseng (Korean ginseng).